Consider the following 1151-residue polypeptide: Cation channel sperm-associated protein subunit gamma 1 (1151 aa).

Positions 1–38 (MVSRPAMSPVSPVWPRKPNLWAFWVLRLVLLLSLKSWA) are cleaved as a signal peptide. The Extracellular portion of the chain corresponds to 39–1063 (EDTLQHCTWL…GLPLSSKRSS (1025 aa)). An N-linked (GlcNAc...) asparagine glycan is attached at Asn356. Residues 1064–1084 (FIVMVSTSFFIALVVFYILFC) form a helical membrane-spanning segment. The Cytoplasmic segment spans residues 1085 to 1151 (LVWPHIVKAW…NVQAKRAKVA (67 aa)). Low complexity predominate over residues 1113-1123 (SSSSGGFTLHS). The interval 1113-1151 (SSSSGGFTLHSHSSEGSFEGPSRPGTKEDNVQAKRAKVA) is disordered.

Belongs to the CATSPERG family.

The protein localises to the membrane. The chain is Cation channel sperm-associated protein subunit gamma 1 (Catsperg1) from Mus musculus (Mouse).